A 488-amino-acid polypeptide reads, in one-letter code: pH-response regulator protein palC (488 aa).

The BRO1 domain maps to 2–430; the sequence is PPYLYRLPTT…TVAFQPVPPV (429 aa). The interval 449-488 is disordered; that stretch reads PPPSKFSPSRIGHLNEEQGNDSPELGETEDTSYAGKGNYF.

Belongs to the palC family.

In terms of biological role, required for the proteolytic cleavage of the transcription factor RIM101 in response to alkaline ambient pH. This Cryptococcus neoformans var. neoformans serotype D (strain B-3501A) (Filobasidiella neoformans) protein is pH-response regulator protein palC.